The following is a 122-amino-acid chain: Large ribosomal subunit protein uL14c (122 aa).

This sequence belongs to the universal ribosomal protein uL14 family. Part of the 50S ribosomal subunit.

It is found in the plastid. The protein resides in the chloroplast. Functionally, binds to 23S rRNA. This Stigeoclonium helveticum (Green alga) protein is Large ribosomal subunit protein uL14c.